Reading from the N-terminus, the 745-residue chain is MVPGSEGPARAGGLVADVVFVIEGTANLGPYFEELRKHYLLPAIEYFNGGPPAETDFGGDYGGTQYSLVVFNTVDCAPESYVQCHAPTSSAYEFVTWLDGIKFMGGGGESCSLIAEGLSTALQLFDDFKKMREQIGQTHRVCLLICNSPPYLLPAVESTTYSGCTTESLVQKIGERGIHFSIVSPRKLPALRLLFEKAAPPALLEPLQQPADVSQDPRHMVLVRGLVLPVGGSSTSGSLQTKQAVPLPPAPASAATLSAAPPQALPPVPPQYQVPGNLSAAQVAAQNAVEAAKSQKAGLGPRFSPINPLQQAAPGVGPPFSQAPAPPLAPVPPGAPKPPPASQPSLVSTVAPGPVLAAPAQPGAPSLAGTVTPGGVNGPSAAQLGGPALGGQQSVSNKLLAWSGVLEWQEKPKPASVDANTKLTRSLPCQVYVNHGENLKTEQWPQKLIMQLIPQQLLTTLGPLFRNSRMVQFHFTNKDLESLKGLYRIMGNGFAGCVHFPHTAPCEVRVLMLLYSSKKKIFMGLIPYDQSGFVNGIRQVITNHKQVQQQKLEQQRGMGAQQAPPVLGPILEEQARPPQNLLQLRAPQPQPQGAVGASAATGQPQPQGATQAPTGAPQGPPGAAPGPPPSGPILRPQNPGANPQLRSLLLNPAPPQTGVPPPQASLHHLQPPGAPTLLPPHQSMGQPQLGPQLLHPPPAQSWPTQLPQRAPLPGQMLLSGGPRGPVPQPGLQPSVMEDDILMDLI.

Residues 1–226 are interaction with the Mediator complex; that stretch reads MVPGSEGPAR…PRHMVLVRGL (226 aa). Residues 233 to 243 show a composition bias toward polar residues; it reads SSTSGSLQTKQ. 2 disordered regions span residues 233–266 and 299–374; these read SSTS…QALP and LGPR…VTPG. Low complexity predominate over residues 252–262; the sequence is ASAATLSAAPP. The segment covering 324 to 342 has biased composition (pro residues); that stretch reads PAPPLAPVPPGAPKPPPAS. Residues 389 to 543 are interaction with VP16; the sequence is LGGQQSVSNK…VNGIRQVITN (155 aa). The tract at residues 395-545 is interaction with CREBBP; sequence VSNKLLAWSG…GIRQVITNHK (151 aa). 2 interaction with RARA regions span residues 563–652 and 639–705; these read APPV…LLNP and PGAN…WPTQ. A disordered region spans residues 584–738; the sequence is LRAPQPQPQG…PGLQPSVMED (155 aa). Over residues 596–617 the composition is skewed to low complexity; it reads GASAATGQPQPQGATQAPTGAP. Positions 618–631 are enriched in pro residues; it reads QGPPGAAPGPPPSG. Residues 645–649 carry the LXXLL motif motif; the sequence is LRSLL. Residues 652-663 are compositionally biased toward pro residues; sequence PAPPQTGVPPPQ. Arg-723 bears the Asymmetric dimethylarginine mark.

It belongs to the Mediator complex subunit 25 family. In terms of assembly, component of the Mediator complex, which is composed of MED1, MED4, MED6, MED7, MED8, MED9, MED10, MED11, MED12, MED13, MED13L, MED14, MED15, MED16, MED17, MED18, MED19, MED20, MED21, MED22, MED23, MED24, MED25, MED26, MED27, MED29, MED30, MED31, CCNC, CDK8 and CDC2L6/CDK11. The MED12, MED13, CCNC and CDK8 subunits form a distinct module termed the CDK8 module. Mediator containing the CDK8 module is less active than Mediator lacking this module in supporting transcriptional activation. Individual preparations of the Mediator complex lacking one or more distinct subunits have been variously termed ARC, CRSP, DRIP, PC2, SMCC and TRAP. Interacts with CREBBP. Interacts with ESR1, GR and THRB in a ligand-dependent fashion. Binds the Herpes simplex virus activator VP16. Interacts with RARA and RXRA in a ligand-dependent fashion.

The protein resides in the nucleus. Component of the Mediator complex, a coactivator involved in the regulated transcription of nearly all RNA polymerase II-dependent genes. Mediator functions as a bridge to convey information from gene-specific regulatory proteins to the basal RNA polymerase II transcription machinery. Mediator is recruited to promoters by direct interactions with regulatory proteins and serves as a scaffold for the assembly of a functional preinitiation complex with RNA polymerase II and the general transcription factors. Required for RARA/RXRA-mediated transcription. The protein is Mediator of RNA polymerase II transcription subunit 25 (Med25) of Mus musculus (Mouse).